The following is a 153-amino-acid chain: MSEKYVVTWDMFQMHARKLSERLLPASQWKGIIAVSRGGLFPAAVLARELGIRHIETVCIASYHDHVEQGELKVLHRAEGDGEGFIVVDDLVDTGNTARAIRDMYPKAKFVTVFAKPAGAALVDDYVIDIPQNTWIEQPWDLGLTFVPPLARK.

Residues 37 to 38 (RG) and 89 to 97 (DDLVDTGNT) contribute to the 5-phospho-alpha-D-ribose 1-diphosphate site. A Mg(2+)-binding site is contributed by Asp-90. Asp-93 and Ile-136 together coordinate guanine. The xanthine site is built by Asp-93 and Ile-136. Residues 93 to 97 (DTGNT) and 135 to 136 (WI) each bind GMP.

This sequence belongs to the purine/pyrimidine phosphoribosyltransferase family. XGPT subfamily. In terms of assembly, homotetramer. Mg(2+) serves as cofactor.

The protein localises to the cell inner membrane. It catalyses the reaction GMP + diphosphate = guanine + 5-phospho-alpha-D-ribose 1-diphosphate. The enzyme catalyses XMP + diphosphate = xanthine + 5-phospho-alpha-D-ribose 1-diphosphate. The catalysed reaction is IMP + diphosphate = hypoxanthine + 5-phospho-alpha-D-ribose 1-diphosphate. It participates in purine metabolism; GMP biosynthesis via salvage pathway; GMP from guanine: step 1/1. Its pathway is purine metabolism; XMP biosynthesis via salvage pathway; XMP from xanthine: step 1/1. In terms of biological role, purine salvage pathway enzyme that catalyzes the transfer of the ribosyl-5-phosphate group from 5-phospho-alpha-D-ribose 1-diphosphate (PRPP) to the N9 position of the 6-oxopurines guanine and xanthine to form the corresponding ribonucleotides GMP (guanosine 5'-monophosphate) and XMP (xanthosine 5'-monophosphate), with the release of PPi. To a lesser extent, also acts on hypoxanthine. The polypeptide is Xanthine-guanine phosphoribosyltransferase (Pasteurella multocida (strain Pm70)).